A 306-amino-acid polypeptide reads, in one-letter code: RNA-binding protein Raly (306 aa).

S2 is subject to N-acetylserine. K4 participates in a covalent cross-link: Glycyl lysine isopeptide (Lys-Gly) (interchain with G-Cter in SUMO2). Positions 21 to 92 (SRVFIGNLNT…QTLDINMAGE (72 aa)) constitute an RRM domain. K44 carries the N6-acetyllysine modification. A Phosphoserine modification is found at S63. Glycyl lysine isopeptide (Lys-Gly) (interchain with G-Cter in SUMO2) cross-links involve residues K94 and K99. Residues S106 and S135 each carry the phosphoserine modification. Residue K159 forms a Glycyl lysine isopeptide (Lys-Gly) (interchain with G-Cter in SUMO2) linkage. N6-acetyllysine; alternate is present on K165. A Glycyl lysine isopeptide (Lys-Gly) (interchain with G-Cter in SUMO2); alternate cross-link involves residue K165. Glycyl lysine isopeptide (Lys-Gly) (interchain with G-Cter in SUMO2) cross-links involve residues K179 and K191. Residues 183–216 (KSSELQAIKTELTQIKSNIDALLSRLEQIAAEQK) adopt a coiled-coil conformation. A disordered region spans residues 215-306 (QKANPDGKKK…DTDADDGALQ (92 aa)). Residues 217–226 (ANPDGKKKGD) show a composition bias toward basic and acidic residues. Residues 227–252 (GGGAGGGGGGGGSGGGGSGGGGGGGS) are compositionally biased toward gly residues. The interval 227 to 253 (GGGAGGGGGGGGSGGGGSGGGGGGGSS) is epitope (recognized by BKRF1 antibodies). At T262 the chain carries Phosphothreonine. S264 is modified (phosphoserine). T286 is modified (phosphothreonine). The span at 287–297 (HSEEELEHSQD) shows a compositional bias: basic and acidic residues. S288 and S295 each carry phosphoserine. T298 carries the post-translational modification Phosphothreonine.

This sequence belongs to the RRM HNRPC family. RALY subfamily. In terms of assembly, identified in the spliceosome C complex. Interacts (through its RNA-binding domain) with FUS (through its RNA-binding domain); both are components of the same RNPs. As to expression, expressed in heart, brain, lung, liver, skeletal muscle, kidney and pancreas. Weakly expressed in placenta.

It localises to the nucleus. In terms of biological role, RNA-binding protein that acts as a transcriptional cofactor for cholesterol biosynthetic genes in the liver. Binds the lipid-responsive non-coding RNA LeXis and is required for LeXis-mediated effect on cholesterogenesis. May be a heterogeneous nuclear ribonucleoprotein (hnRNP). This chain is RNA-binding protein Raly (RALY), found in Homo sapiens (Human).